The chain runs to 185 residues: Large ribosomal subunit protein uL5 (185 aa).

The protein belongs to the universal ribosomal protein uL5 family. As to quaternary structure, part of the 50S ribosomal subunit; part of the 5S rRNA/L5/L18/L25 subcomplex. Contacts the 5S rRNA and the P site tRNA. Forms a bridge to the 30S subunit in the 70S ribosome.

In terms of biological role, this is one of the proteins that bind and probably mediate the attachment of the 5S RNA into the large ribosomal subunit, where it forms part of the central protuberance. In the 70S ribosome it contacts protein S13 of the 30S subunit (bridge B1b), connecting the 2 subunits; this bridge is implicated in subunit movement. Contacts the P site tRNA; the 5S rRNA and some of its associated proteins might help stabilize positioning of ribosome-bound tRNAs. The sequence is that of Large ribosomal subunit protein uL5 from Azorhizobium caulinodans (strain ATCC 43989 / DSM 5975 / JCM 20966 / LMG 6465 / NBRC 14845 / NCIMB 13405 / ORS 571).